A 59-amino-acid polypeptide reads, in one-letter code: Large ribosomal subunit protein uL30 (59 aa).

Belongs to the universal ribosomal protein uL30 family. Part of the 50S ribosomal subunit.

This chain is Large ribosomal subunit protein uL30, found in Alkaliphilus metalliredigens (strain QYMF).